Here is a 382-residue protein sequence, read N- to C-terminus: Flap endonuclease 1 (382 aa).

The N-domain stretch occupies residues 1 to 104; sequence MGIKGLSQVI…GELEKRSERR (104 aa). Aspartate 34 provides a ligand contact to Mg(2+). DNA-binding residues include arginine 47 and arginine 70. Aspartate 86, glutamate 158, glutamate 160, aspartate 179, and aspartate 181 together coordinate Mg(2+). The segment at 122–253 is I-domain; the sequence is EAEKFERRLV…KKAVELIRQH (132 aa). Glutamate 158 lines the DNA pocket. DNA is bound by residues glycine 231 and aspartate 233. Aspartate 233 contacts Mg(2+). An interaction with PCNA region spans residues 336 to 344; sequence TQGRIDSFF. The segment at 358-382 is disordered; that stretch reads KRKAEEAEKAKKGAKKGGPPKKRAK. The span at 359–368 shows a compositional bias: basic and acidic residues; that stretch reads RKAEEAEKAK. Over residues 369–382 the composition is skewed to basic residues; the sequence is KGAKKGGPPKKRAK.

The protein belongs to the XPG/RAD2 endonuclease family. FEN1 subfamily. As to quaternary structure, interacts with PCNA. Three molecules of crn-1 bind to one PCNA trimer with each molecule binding to one PCNA monomer. PCNA stimulates the nuclease activity without altering cleavage specificity. Interacts with cps-6. Mg(2+) serves as cofactor. Post-translationally, phosphorylated. Phosphorylation upon DNA damage induces relocalization to the nuclear plasma.

It localises to the nucleus. It is found in the nucleolus. The protein localises to the nucleoplasm. The protein resides in the mitochondrion. Functionally, structure-specific nuclease with 5'-flap endonuclease and 5'-3' exonuclease activities involved in DNA replication and repair. During DNA replication, cleaves the 5'-overhanging flap structure that is generated by displacement synthesis when DNA polymerase encounters the 5'-end of a downstream Okazaki fragment. It enters the flap from the 5'-end and then tracks to cleave the flap base, leaving a nick for ligation. Also involved in the long patch base excision repair (LP-BER) pathway, by cleaving within the apurinic/apyrimidinic (AP) site-terminated flap. Acts as a genome stabilization factor that prevents flaps from equilibrating into structures that lead to duplications and deletions. Also possesses 5'-3' exonuclease activity on nicked or gapped double-stranded DNA, and exhibits RNase H activity. Also involved in replication and repair of rDNA and in repairing mitochondrial DNA. Can associate and cooperate with cps-6 to promote stepwise DNA fragmentation, utilizing the endonuclease activity of cps-6 and both of its own 5'-3' exonuclease activity and gap-dependent endonuclease activity. May play a critical role in switching the state of cells from DNA replication/repair to DNA degradation during apoptosis. The polypeptide is Flap endonuclease 1 (Caenorhabditis elegans).